A 193-amino-acid chain; its full sequence is 3-isopropylmalate dehydratase small subunit (193 aa).

Belongs to the LeuD family. LeuD type 1 subfamily. As to quaternary structure, heterodimer of LeuC and LeuD.

It carries out the reaction (2R,3S)-3-isopropylmalate = (2S)-2-isopropylmalate. It participates in amino-acid biosynthesis; L-leucine biosynthesis; L-leucine from 3-methyl-2-oxobutanoate: step 2/4. In terms of biological role, catalyzes the isomerization between 2-isopropylmalate and 3-isopropylmalate, via the formation of 2-isopropylmaleate. This chain is 3-isopropylmalate dehydratase small subunit, found in Listeria monocytogenes serotype 4b (strain CLIP80459).